A 473-amino-acid polypeptide reads, in one-letter code: Deoxyribodipyrimidine photo-lyase (473 aa).

In terms of domain architecture, Photolyase/cryptochrome alpha/beta spans P2–I134. Residues N109 and E110 each contribute to the (6R)-5,10-methylene-5,6,7,8-tetrahydrofolate site. An FAD-binding site is contributed by Y224. Residue R228 coordinates DNA. Residue T236–S240 coordinates FAD. 2 interaction with DNA regions span residues E276–Y283 and N343–R344. D374–D376 contributes to the FAD binding site. Q406 lines the DNA pocket.

This sequence belongs to the DNA photolyase class-1 family. As to quaternary structure, monomer. The cofactor is FAD. (6R)-5,10-methylene-5,6,7,8-tetrahydrofolate serves as cofactor.

It catalyses the reaction cyclobutadipyrimidine (in DNA) = 2 pyrimidine residues (in DNA).. In terms of biological role, involved in repair of UV radiation-induced DNA damage. Catalyzes the light-dependent monomerization (300-600 nm) of cyclobutyl pyrimidine dimers (in cis-syn configuration), which are formed between adjacent bases on the same DNA strand upon exposure to ultraviolet radiation. The sequence is that of Deoxyribodipyrimidine photo-lyase (phrB) from Salmonella typhimurium (strain LT2 / SGSC1412 / ATCC 700720).